Here is a 378-residue protein sequence, read N- to C-terminus: Cysteine endopeptidase RepA (378 aa).

The signal sequence occupies residues 1 to 24 (MLRCFLVAAAAVALAAAAAAPARA). Residues 25 to 141 (IPFTESDLSS…SFRYGGDDED (117 aa)) constitute a propeptide, activation peptide. 3 disulfide bridges follow: Cys164-Cys206, Cys198-Cys239, and Cys297-Cys350. Cys167 is a catalytic residue. Active-site residues include His303 and Asn324.

It belongs to the peptidase C1 family.

It localises to the protein storage vacuole. Cysteine endopeptidase that digests in vitro both the acidic and basic subunits of glutelin, the major seed storage protein of rice. This is Cysteine endopeptidase RepA from Oryza sativa subsp. japonica (Rice).